Here is a 189-residue protein sequence, read N- to C-terminus: ATP synthase subunit b (189 aa).

The chain crosses the membrane as a helical span at residues 38–58 (PMFLATLIAFILVVLILWFLL).

It belongs to the ATPase B chain family. F-type ATPases have 2 components, F(1) - the catalytic core - and F(0) - the membrane proton channel. F(1) has five subunits: alpha(3), beta(3), gamma(1), delta(1), epsilon(1). F(0) has three main subunits: a(1), b(2) and c(10-14). The alpha and beta chains form an alternating ring which encloses part of the gamma chain. F(1) is attached to F(0) by a central stalk formed by the gamma and epsilon chains, while a peripheral stalk is formed by the delta and b chains.

It is found in the cell membrane. Its function is as follows. F(1)F(0) ATP synthase produces ATP from ADP in the presence of a proton or sodium gradient. F-type ATPases consist of two structural domains, F(1) containing the extramembraneous catalytic core and F(0) containing the membrane proton channel, linked together by a central stalk and a peripheral stalk. During catalysis, ATP synthesis in the catalytic domain of F(1) is coupled via a rotary mechanism of the central stalk subunits to proton translocation. In terms of biological role, component of the F(0) channel, it forms part of the peripheral stalk, linking F(1) to F(0). This Mycoplasmopsis agalactiae (strain NCTC 10123 / CIP 59.7 / PG2) (Mycoplasma agalactiae) protein is ATP synthase subunit b.